A 424-amino-acid chain; its full sequence is Enolase (424 aa).

Position 165 (Gln-165) interacts with (2R)-2-phosphoglycerate. Catalysis depends on Glu-207, which acts as the Proton donor. 3 residues coordinate Mg(2+): Asp-244, Glu-283, and Asp-310. Residues Lys-335, Arg-364, Ser-365, and Lys-386 each coordinate (2R)-2-phosphoglycerate. Residue Lys-335 is the Proton acceptor of the active site.

Belongs to the enolase family. Mg(2+) is required as a cofactor.

It is found in the cytoplasm. Its subcellular location is the secreted. It localises to the cell surface. It carries out the reaction (2R)-2-phosphoglycerate = phosphoenolpyruvate + H2O. The protein operates within carbohydrate degradation; glycolysis; pyruvate from D-glyceraldehyde 3-phosphate: step 4/5. Its function is as follows. Catalyzes the reversible conversion of 2-phosphoglycerate (2-PG) into phosphoenolpyruvate (PEP). It is essential for the degradation of carbohydrates via glycolysis. This is Enolase from Chlamydia caviae (strain ATCC VR-813 / DSM 19441 / 03DC25 / GPIC) (Chlamydophila caviae).